Here is a 123-residue protein sequence, read N- to C-terminus: Anti-lipopolysaccharide factor (123 aa).

Positions 1–26 are cleaved as a signal peptide; it reads MRKGVVAGLCLALVVMCLYLPQPCEA. The N-linked (GlcNAc...) asparagine glycan is linked to Asn45. The cysteines at positions 55 and 76 are disulfide-linked.

Isoform 1 is highly expressed in muscle and stomach, moderately in heart and gill and at lower levels in hemocytes and hepatopancreas. Isoform 2 is mainly expressed in gill, hepatopancreas, muscle and eyestalk.

The protein localises to the secreted. Its function is as follows. May bind to bacterial LPS and thus specifically inhibit the LPS-mediated activation of the hemolymph coagulation. It has a strong antibacterial effect especially on the growth of Gram-negative bacteria. The sequence is that of Anti-lipopolysaccharide factor from Portunus trituberculatus (Swimming crab).